Here is a 227-residue protein sequence, read N- to C-terminus: Cytochrome c oxidase subunit 2 (227 aa).

Over 1–14 (MAYPFQLGLQDATS) the chain is Mitochondrial intermembrane. A helical transmembrane segment spans residues 15–45 (PIMEELLHFHDHTLMIVFLISSLVLYIITLM). Residues 46–59 (LTTKLTHTSTMDAQ) lie on the Mitochondrial matrix side of the membrane. Residues 60–87 (EVETVWTILPAIILILIALPSLRILYMM) form a helical membrane-spanning segment. At 88-227 (DEINNPSLTV…YFETWSALMV (140 aa)) the chain is on the mitochondrial intermembrane side. The Cu cation site is built by His161, Cys196, Glu198, Cys200, His204, and Met207. Glu198 lines the Mg(2+) pocket. A Phosphotyrosine modification is found at Tyr218.

Belongs to the cytochrome c oxidase subunit 2 family. As to quaternary structure, component of the cytochrome c oxidase (complex IV, CIV), a multisubunit enzyme composed of 14 subunits. The complex is composed of a catalytic core of 3 subunits MT-CO1, MT-CO2 and MT-CO3, encoded in the mitochondrial DNA, and 11 supernumerary subunits COX4I, COX5A, COX5B, COX6A, COX6B, COX6C, COX7A, COX7B, COX7C, COX8 and NDUFA4, which are encoded in the nuclear genome. The complex exists as a monomer or a dimer and forms supercomplexes (SCs) in the inner mitochondrial membrane with NADH-ubiquinone oxidoreductase (complex I, CI) and ubiquinol-cytochrome c oxidoreductase (cytochrome b-c1 complex, complex III, CIII), resulting in different assemblies (supercomplex SCI(1)III(2)IV(1) and megacomplex MCI(2)III(2)IV(2)). Found in a complex with TMEM177, COA6, COX18, COX20, SCO1 and SCO2. Interacts with TMEM177 in a COX20-dependent manner. Interacts with COX20. Interacts with COX16. Cu cation is required as a cofactor.

The protein localises to the mitochondrion inner membrane. The enzyme catalyses 4 Fe(II)-[cytochrome c] + O2 + 8 H(+)(in) = 4 Fe(III)-[cytochrome c] + 2 H2O + 4 H(+)(out). Its function is as follows. Component of the cytochrome c oxidase, the last enzyme in the mitochondrial electron transport chain which drives oxidative phosphorylation. The respiratory chain contains 3 multisubunit complexes succinate dehydrogenase (complex II, CII), ubiquinol-cytochrome c oxidoreductase (cytochrome b-c1 complex, complex III, CIII) and cytochrome c oxidase (complex IV, CIV), that cooperate to transfer electrons derived from NADH and succinate to molecular oxygen, creating an electrochemical gradient over the inner membrane that drives transmembrane transport and the ATP synthase. Cytochrome c oxidase is the component of the respiratory chain that catalyzes the reduction of oxygen to water. Electrons originating from reduced cytochrome c in the intermembrane space (IMS) are transferred via the dinuclear copper A center (CU(A)) of subunit 2 and heme A of subunit 1 to the active site in subunit 1, a binuclear center (BNC) formed by heme A3 and copper B (CU(B)). The BNC reduces molecular oxygen to 2 water molecules using 4 electrons from cytochrome c in the IMS and 4 protons from the mitochondrial matrix. This chain is Cytochrome c oxidase subunit 2 (MT-CO2), found in Vulpes macrotis (Kit fox).